Consider the following 136-residue polypeptide: Histone H3, embryonic (136 aa).

A disordered region spans residues 1–43 (MARTKQTARKSTGGKAPRKQLATKAARKSAPATGGVKKPHRYR). Residue Lys5 is modified to N6-methylated lysine. Position 10 is an N6-acetyllysine; alternate (Lys10). Lys10 is modified (N6-methylated lysine; alternate). At Ser11 the chain carries Phosphoserine. An N6-acetyllysine mark is found at Lys15 and Lys24. N6-methylated lysine is present on residues Lys28, Lys37, and Lys80.

It belongs to the histone H3 family. In terms of assembly, the nucleosome is a histone octamer containing two molecules each of H2A, H2B, H3 and H4 assembled in one H3-H4 heterotetramer and two H2A-H2B heterodimers. The octamer wraps approximately 147 bp of DNA. Acetylation is generally linked to gene activation. Post-translationally, methylation at Lys-5 is linked to gene activation. Methylation at Lys-10 is linked to gene repression.

It localises to the nucleus. The protein localises to the chromosome. Its function is as follows. Core component of nucleosome. Nucleosomes wrap and compact DNA into chromatin, limiting DNA accessibility to the cellular machineries which require DNA as a template. Histones thereby play a central role in transcription regulation, DNA repair, DNA replication and chromosomal stability. DNA accessibility is regulated via a complex set of post-translational modifications of histones, also called histone code, and nucleosome remodeling. This Strongylocentrotus purpuratus (Purple sea urchin) protein is Histone H3, embryonic.